An 80-amino-acid chain; its full sequence is Cell division activator CedA (80 aa).

This sequence belongs to the CedA family.

In terms of biological role, activates the cell division inhibited by chromosomal DNA over-replication. The polypeptide is Cell division activator CedA (Salmonella typhimurium (strain LT2 / SGSC1412 / ATCC 700720)).